Here is a 773-residue protein sequence, read N- to C-terminus: Carnitine O-palmitoyltransferase 1, liver isoform (773 aa).

Alanine 2 bears the N-acetylalanine mark. At 2–47 (AEAHQAVAFQFTVTPDGIDLRLSHEALKQICLSGLHSWKKKFIRFK) the chain is on the cytoplasmic side. The chain crosses the membrane as a helical span at residues 48-73 (NGIITGVFPANPSSWLIVVVGVISSM). Topologically, residues 74–102 (HAKVDPSLGMIAKISRTLDTTGRMSSQTK) are mitochondrial intermembrane. Residues 103-122 (NIVSGVLFGTGLWVAVIMTM) traverse the membrane as a helical segment. Topologically, residues 123–773 (RYSLKVLLSY…LFGLTINSKK (651 aa)) are cytoplasmic. Tyrosine 282 bears the 3'-nitrotyrosine mark. Histidine 473 functions as the Proton acceptor in the catalytic mechanism. CoA is bound at residue 555–567 (GKGLIKKCRTSPD). A Phosphothreonine modification is found at threonine 588. Residue tyrosine 589 is modified to 3'-nitrotyrosine. The (R)-carnitine site is built by tyrosine 589 and threonine 602. Threonine 604 is modified (phosphothreonine). A phosphoserine mark is found at serine 741 and serine 747.

Belongs to the carnitine/choline acetyltransferase family. Homohexamer and homotrimer. Identified in a complex that contains at least CPT1A, ACSL1 and VDAC1. Also identified in complexes with ACSL1 and VDAC2 and VDAC3. Interacts with ZDHHC4. Liver and kidney.

The protein resides in the mitochondrion outer membrane. The enzyme catalyses (R)-carnitine + hexadecanoyl-CoA = O-hexadecanoyl-(R)-carnitine + CoA. It carries out the reaction succinyl-CoA + L-lysyl-[protein] = N(6)-succinyl-L-lysyl-[protein] + CoA + H(+). Its pathway is lipid metabolism; fatty acid beta-oxidation. With respect to regulation, inhibited by malonyl-CoA. Functionally, catalyzes the transfer of the acyl group of long-chain fatty acid-CoA conjugates onto carnitine, an essential step for the mitochondrial uptake of long-chain fatty acids and their subsequent beta-oxidation in the mitochondrion. Also possesses a lysine succinyltransferase activity that can regulate enzymatic activity of substrate proteins such as ENO1 and metabolism independent of its classical carnitine O-palmitoyltransferase activity. Plays an important role in hepatic triglyceride metabolism. Also plays a role in inducible regulatory T-cell (iTreg) differentiation once activated by butyryl-CoA that antagonizes malonyl-CoA-mediated CPT1A repression. Sustains the IFN-I response by recruiting ZDHCC4 to palmitoylate MAVS at the mitochondria leading to MAVS stabilization and activation. This Rattus norvegicus (Rat) protein is Carnitine O-palmitoyltransferase 1, liver isoform (Cpt1a).